Reading from the N-terminus, the 226-residue chain is 2,3-bisphosphoglycerate-dependent phosphoglycerate mutase (226 aa).

Substrate contacts are provided by residues 8–15 (RHGQSVWN), 21–22 (TG), R58, 109–112 (ERMY), K120, 136–137 (RR), and 180–181 (GN). Residue H9 is the Tele-phosphohistidine intermediate of the active site. E109 serves as the catalytic Proton donor/acceptor.

Belongs to the phosphoglycerate mutase family. BPG-dependent PGAM subfamily.

The catalysed reaction is (2R)-2-phosphoglycerate = (2R)-3-phosphoglycerate. It participates in carbohydrate degradation; glycolysis; pyruvate from D-glyceraldehyde 3-phosphate: step 3/5. In terms of biological role, catalyzes the interconversion of 2-phosphoglycerate and 3-phosphoglycerate. The sequence is that of 2,3-bisphosphoglycerate-dependent phosphoglycerate mutase from Chlamydia muridarum (strain MoPn / Nigg).